A 234-amino-acid polypeptide reads, in one-letter code: Orotidine 5'-phosphate decarboxylase (234 aa).

Residues aspartate 10, lysine 32, 59 to 68, threonine 122, arginine 184, glutamine 193, glycine 213, and arginine 214 contribute to the substrate site; that span reads DLKLHDIPTT. The Proton donor role is filled by lysine 61.

The protein belongs to the OMP decarboxylase family. Type 1 subfamily. In terms of assembly, homodimer.

The catalysed reaction is orotidine 5'-phosphate + H(+) = UMP + CO2. It functions in the pathway pyrimidine metabolism; UMP biosynthesis via de novo pathway; UMP from orotate: step 2/2. Functionally, catalyzes the decarboxylation of orotidine 5'-monophosphate (OMP) to uridine 5'-monophosphate (UMP). The sequence is that of Orotidine 5'-phosphate decarboxylase from Bacillus pumilus (strain SAFR-032).